The following is a 283-amino-acid chain: Nudix hydrolase 6 (283 aa).

Residues 101-233 form the Nudix hydrolase domain; sequence SHRIGVGAFV…KKELFRFMAN (133 aa). The Nudix box motif lies at 139 to 160; it reads GVVKEGENIWEGALREVEEETG. A divalent metal cation contacts are provided by Glu-154, Glu-158, and Glu-204.

Belongs to the Nudix hydrolase family. Mg(2+) is required as a cofactor. Mn(2+) serves as cofactor. In terms of tissue distribution, expressed in stems and leaves. Weakly or not expressed in roots.

The catalysed reaction is ADP-D-ribose + H2O = D-ribose 5-phosphate + AMP + 2 H(+). It carries out the reaction NAD(+) + H2O = beta-nicotinamide D-ribonucleotide + AMP + 2 H(+). The enzyme catalyses NADH + H2O = reduced beta-nicotinamide D-ribonucleotide + AMP + 2 H(+). Probably mediates the hydrolysis of some nucleoside diphosphate derivatives. In vitro, it can use both NADH and ADP-ribose as substrates; however the relevance of such substrates in vivo is unclear. This is Nudix hydrolase 6 from Arabidopsis thaliana (Mouse-ear cress).